A 73-amino-acid polypeptide reads, in one-letter code: UPF0346 protein SSP1318 (73 aa).

The protein belongs to the UPF0346 family.

The chain is UPF0346 protein SSP1318 from Staphylococcus saprophyticus subsp. saprophyticus (strain ATCC 15305 / DSM 20229 / NCIMB 8711 / NCTC 7292 / S-41).